A 347-amino-acid polypeptide reads, in one-letter code: MSVAGLKKQFHKASQLFSEKISGAEGTKLDDEFLDMERKIDVTNKVVAEILSKTTEYLQPNPAYRAKLGMLNTVSKIRGQVKTTGYPQTEGLLGDCMLKYGKELGEDSTFGNALIEVGESMKLMAEVKDSLDINVKQTFIDPLQLLQDKDLKEIGHHLKKLEGRRLDYDYKKKRVGKIPDEEVRQAVEKFEESKELAERSMFNFLENDVEQVSQLAVFIEAALDYHRQSTEILQELQSKLQMRISAASSVPRREYKPRPVKRSSSELNGVSTTSVVKTTGSNIPMDQPCCRGLYDFEPENQGELGFKEGDIITLTNQIDENWYEGMIHGESGFFPINYVEVIVPLPQ.

A membrane-binding amphipathic helix region spans residues Met1 to Ile21. Residues Ser18–Ser249 enclose the BAR domain. The segment at Pro60–Pro87 is required for dimerization upon membrane association. The stretch at Glu181–Met201 forms a coiled coil. Positions Phe218–Glu254 are interaction with ARC. Residues Ser248–Ser271 form a disordered region. A Phosphoserine modification is found at Ser265. The region spanning Met285–Pro344 is the SH3 domain.

The protein belongs to the endophilin family. As to quaternary structure, interacts with ARC. Interacts with DNM1, SGIP1 and SYNJ1. Interacts with the huntingtin exon 1 protein (HDEX1P) containing a glutamine repeat in the pathological range and promotes formation of insoluble polyglutamine-containing aggregates in vivo. Interacts with DYDC1. Interacts with FASLG. Interacts with ATXN2. Interacts with BIN2. In terms of tissue distribution, brain and testis.

The protein localises to the cytoplasm. The protein resides in the early endosome membrane. Implicated in endocytosis. May recruit other proteins to membranes with high curvature. The polypeptide is Endophilin-A3 (SH3GL3) (Homo sapiens (Human)).